A 209-amino-acid polypeptide reads, in one-letter code: Small ribosomal subunit protein uS3c (209 aa).

The KH type-2 domain maps to 39-109 (IRSCIEKQLH…QIRINLIEIT (71 aa)).

Belongs to the universal ribosomal protein uS3 family. In terms of assembly, part of the 30S ribosomal subunit.

It localises to the plastid. The protein resides in the chloroplast. In Gracilaria tenuistipitata (Red alga), this protein is Small ribosomal subunit protein uS3c (rps3).